The chain runs to 1542 residues: Pleiotropic ABC efflux transporter of multiple drugs PDH1 (1542 aa).

Over residues 1 to 14 the composition is skewed to low complexity; it reads MNTPDDSSVSSVDS. Residues 1 to 61 are disordered; it reads MNTPDDSSVS…APADGSAPLD (61 aa). Residues 1-517 lie on the Cytoplasmic side of the membrane; sequence MNTPDDSSVS…LIRNFWRIKN (517 aa). Residues 24 to 33 are compositionally biased toward basic and acidic residues; that stretch reads NVEKRIRELA. Residues 35–47 are compositionally biased toward polar residues; that stretch reads SLTQQSLTSSNRS. In terms of domain architecture, ABC transporter 1 spans 153 to 409; that stretch reads VKLLNAVWRK…FQKMGYFCPK (257 aa). 6 consecutive transmembrane segments (helical) span residues 518 to 540, 552 to 574, 603 to 625, 634 to 652, 662 to 684, and 773 to 792; these read SASV…GSMF, FYFR…LLEI, VISE…YFLV, FFFY…SHLF, LQEA…GFAI, and GFGV…LILC. The Cytoplasmic segment spans residues 793–1220; sequence EFNEGAKQKG…LFQQYWRTPD (428 aa). Residues 825-834 show a composition bias toward basic and acidic residues; it reads TKMHTDKNDI. The disordered stretch occupies residues 825–846; the sequence is TKMHTDKNDIENNSESITSNAT. Residues 835–846 show a composition bias toward polar residues; the sequence is ENNSESITSNAT. The 244-residue stretch at 885–1128 folds into the ABC transporter 2 domain; sequence FHWQNLCYDV…MIKYFEDHGA (244 aa). An ATP-binding site is contributed by 921 to 928; sequence GASGAGKT. 6 consecutive transmembrane segments (helical) span residues 1221 to 1241, 1256 to 1276, 1296 to 1316, 1342 to 1362, 1370 to 1390, and 1495 to 1515; these read YLWS…FTFF, SIFM…PTFV, AFIL…GTLA, LFWL…LFVI, TAAH…GVMA, and GIFI…YWLA. At 1516–1542 the chain is on the cytoplasmic side; it reads RVPKTNGKIAKNGKTAKVNFIRRLIPF.

The protein belongs to the ABC transporter superfamily. ABCG family. PDR (TC 3.A.1.205) subfamily. In terms of processing, phosphorylated by PKA. Dephosphorylated on glucose depletion and independently rephosphorylated during glucose exposure or under stress.

Its subcellular location is the cell membrane. Functionally, pleiotropic ABC efflux transporter that confers resistance to structurally and functionally unrelated compounds including caspofungin or azoles such as fluconazole, itraconazole, posaconazole, voriconazole, and isavuconazole. Does not play a role in the azole resistance in mature biofilms. The sequence is that of Pleiotropic ABC efflux transporter of multiple drugs PDH1 from Candida glabrata (strain ATCC 2001 / BCRC 20586 / JCM 3761 / NBRC 0622 / NRRL Y-65 / CBS 138) (Yeast).